The primary structure comprises 605 residues: MPNLQLILKTILITELLILALSALMTMLPPILNKLTWDPEKAMTTTFRLSLTSILIHILIEEPSSISSLYSPTMLNLAMSIKIDYYSLIFISIALFITRAILQYTKWYMASDRDLKKFSMFLLLFLMSMIMFIAANNFFPMLVGWGTMGLMSYLLISWWHGRTEATTSGLQAILYNRLADIGFILTFSWCITYMSSLDLNTFFATSTLVTGVPILGMLMAAMGKSAQFGMHPWLPAAMEGPTPVSALLHSSTMVTAGVYLLIGMHPILSQTQGFSEACLTMGAATALYASFKALLQNDLKKIIAFSTLSQLGFMMATVGLNHPNLAFMHLCMHAFFKAMMFLCAGSISHALFGEQDIRKMSGMIKVTPITASCFTLSTLALAGFPFLTGFFSKDLIIETILLSKINMLWATMLLISTMFTAIYSLRMTLRILTGTPWYNDLLTYEENPTCTKPIMKLALASIVTGSLFSLFTPPIYTPLQTMPPTIKLAALTLTFMSAFLAMYLISLANNKPLPKNTIQNHMLQTAKDLKIITHRHLMAKLLKASQKTALQILDNHWKLKAGPKYIEKTQIPMSMKTSTQSGLIKTYFMAFLVTFVIILYIMLFY.

The next 16 membrane-spanning stretches (helical) occupy residues 11–31, 49–69, 77–97, 120–140, 141–161, 178–198, 202–222, 244–264, 273–295, 302–322, 325–345, 371–391, 408–425, 457–477, 488–508, and 584–604; these read ILITELLILALSALMTMLPPI, LSLTSILIHILIEEPSSISSL, LAMSIKIDYYSLIFISIALFI, MFLLLFLMSMIMFIAANNFFP, MLVGWGTMGLMSYLLISWWHG, LADIGFILTFSWCITYMSSLD, FFATSTLVTGVPILGMLMAAM, VSALLHSSTMVTAGVYLLIGM, GFSEACLTMGAATALYASFKALL, IIAFSTLSQLGFMMATVGLNH, LAFMHLCMHAFFKAMMFLCAG, ASCFTLSTLALAGFPFLTGFF, LWATMLLISTMFTAIYSL, LALASIVTGSLFSLFTPPIYT, LAALTLTFMSAFLAMYLISLA, and IKTYFMAFLVTFVIILYIMLF.

This sequence belongs to the complex I subunit 5 family.

Its subcellular location is the mitochondrion inner membrane. The catalysed reaction is a ubiquinone + NADH + 5 H(+)(in) = a ubiquinol + NAD(+) + 4 H(+)(out). Its function is as follows. Core subunit of the mitochondrial membrane respiratory chain NADH dehydrogenase (Complex I) that is believed to belong to the minimal assembly required for catalysis. Complex I functions in the transfer of electrons from NADH to the respiratory chain. The immediate electron acceptor for the enzyme is believed to be ubiquinone. The sequence is that of NADH-ubiquinone oxidoreductase chain 5 (MT-ND5) from Pelomedusa subrufa (African side-necked turtle).